Reading from the N-terminus, the 427-residue chain is 5-hydroxybenzimidazole synthase BzaB (427 aa).

The protein belongs to the ThiC family. 5-hydroxybenzimidazole synthase subfamily. It depends on [4Fe-4S] cluster as a cofactor.

It carries out the reaction 5-amino-1-(5-phospho-beta-D-ribosyl)imidazole + AH2 + S-adenosyl-L-methionine = 5-hydroxybenzimidazole + 5'-deoxyadenosine + formate + L-methionine + A + NH4(+) + phosphate + 2 H(+). Its pathway is cofactor biosynthesis; adenosylcobalamin biosynthesis. Functionally, together with BzaA, catalyzes the conversion of aminoimidazole ribotide (AIR) to 5-hydroxybenzimidazole (5-HBI) in a radical S-adenosyl-L-methionine (SAM)-dependent reaction. Is thus involved in the anaerobic biosynthesis of dimethylbenzimidazole (DMB), the lower axial ligand of vitamin B12 (cobalamin). Requires BzaA for catalytic activity, as BzaB alone displays no activity. In Eubacterium limosum, this protein is 5-hydroxybenzimidazole synthase BzaB.